A 183-amino-acid chain; its full sequence is ATP-dependent protease subunit HslV (183 aa).

Thr-13 is an active-site residue. Na(+) is bound by residues Gly-168, Cys-171, and Thr-174.

It belongs to the peptidase T1B family. HslV subfamily. A double ring-shaped homohexamer of HslV is capped on each side by a ring-shaped HslU homohexamer. The assembly of the HslU/HslV complex is dependent on binding of ATP.

The protein localises to the cytoplasm. It catalyses the reaction ATP-dependent cleavage of peptide bonds with broad specificity.. Allosterically activated by HslU binding. In terms of biological role, protease subunit of a proteasome-like degradation complex believed to be a general protein degrading machinery. The protein is ATP-dependent protease subunit HslV of Xanthomonas oryzae pv. oryzae (strain MAFF 311018).